We begin with the raw amino-acid sequence, 187 residues long: EP300-interacting inhibitor of differentiation 1 (187 aa).

The tract at residues M1–S118 is disordered. 2 stretches are compositionally biased toward acidic residues: residues L52 to A63 and F93 to Q116. The interaction with NR0B2 stretch occupies residues E54–A120. The short motif at L178–E182 is the LXCXE motif element.

As to quaternary structure, interacts via its LXCXE motif with the entire pocket region of RB1. Interacts with EP300, NR0B2 and TRIM27. In terms of processing, ubiquitinated in U2OS osteosarcoma cells and is rapidly degraded by proteasome as cells exit the cell cycle exit. In terms of tissue distribution, widely expressed. Most abundantly expressed in heart, skeletal muscle, pancreas, brain and testis. Expressed at much lower levels in placenta and peripheral blood leukocyte. Barely detectable in lung. Also weakly expressed in lung carcinoma A-549 and various leukemia cell lines.

Its subcellular location is the nucleus. The protein localises to the cytoplasm. Functionally, interacts with RB1 and EP300 and acts as a repressor of MYOD1 transactivation. Inhibits EP300 and CBP histone acetyltransferase activity. May be involved in coupling cell cycle exit to the transcriptional activation of genes required for cellular differentiation. May act as a candidate coinhibitory factor for NR0B2 that can be directly linked to transcription inhibitory mechanisms. The polypeptide is EP300-interacting inhibitor of differentiation 1 (Homo sapiens (Human)).